The chain runs to 105 residues: KARALKITEELDRTMEVPKPVRMHWTGCPNTCAQVQVADIGFMGCMTRDENKKVVEGVDIFIGGRVGADSHLGDLIHKGVPCKDVVPVVQELLIKHFGAIRKTNM.

[4Fe-4S] cluster is bound by residues Cys-28 and Cys-32. Residue Cys-32 participates in siroheme binding.

It belongs to the nitrite and sulfite reductase 4Fe-4S domain family. In terms of assembly, monomer. The cofactor is siroheme. It depends on [4Fe-4S] cluster as a cofactor. As to expression, highest expression in roots and hypocotyls. Some expression in cotyledonary whorls.

The protein resides in the plastid. Its subcellular location is the chloroplast. It carries out the reaction 6 oxidized [2Fe-2S]-[ferredoxin] + NH4(+) + 2 H2O = nitrite + 6 reduced [2Fe-2S]-[ferredoxin] + 8 H(+). It participates in nitrogen metabolism; nitrate reduction (assimilation). The sequence is that of Ferredoxin--nitrite reductase, chloroplastic (NIR) from Pinus sylvestris (Scotch pine).